The sequence spans 912 residues: Isoleucine--tRNA ligase (912 aa).

The 'HIGH' region motif lies at 57–67; that stretch reads PYANGDIHLGT. E549 provides a ligand contact to L-isoleucyl-5'-AMP. A 'KMSKS' region motif is present at residues 590 to 594; it reads KMSKS. K593 serves as a coordination point for ATP. Residues C880, C883, C900, and C903 each coordinate Zn(2+).

It belongs to the class-I aminoacyl-tRNA synthetase family. IleS type 1 subfamily. Monomer. It depends on Zn(2+) as a cofactor.

The protein localises to the cytoplasm. The catalysed reaction is tRNA(Ile) + L-isoleucine + ATP = L-isoleucyl-tRNA(Ile) + AMP + diphosphate. Functionally, catalyzes the attachment of isoleucine to tRNA(Ile). As IleRS can inadvertently accommodate and process structurally similar amino acids such as valine, to avoid such errors it has two additional distinct tRNA(Ile)-dependent editing activities. One activity is designated as 'pretransfer' editing and involves the hydrolysis of activated Val-AMP. The other activity is designated 'posttransfer' editing and involves deacylation of mischarged Val-tRNA(Ile). The protein is Isoleucine--tRNA ligase of Fervidobacterium pennivorans (strain DSM 9078 / Ven5).